Consider the following 177-residue polypeptide: Cytochrome c-type biogenesis protein CcmE (177 aa).

The Cytoplasmic portion of the chain corresponds to 1–8; that stretch reads MNPRRKSR. The helical; Signal-anchor for type II membrane protein transmembrane segment at 9 to 29 threads the bilayer; the sequence is LKVVMAVLSGLAVAVGLTLYA. At 30-177 the chain is on the periplasmic side; the sequence is LSQNIDLFYT…QISQPFGENK (148 aa). Residues His-131 and Tyr-135 each contribute to the heme site. Positions 134–177 are disordered; it reads NYMPPELGDQMKKQHQPMGISEADLKGKSERDATQISQPFGENK. Basic and acidic residues predominate over residues 156-166; sequence ADLKGKSERDA. Over residues 167 to 177 the composition is skewed to polar residues; sequence TQISQPFGENK.

This sequence belongs to the CcmE/CycJ family.

The protein resides in the cell inner membrane. Functionally, heme chaperone required for the biogenesis of c-type cytochromes. Transiently binds heme delivered by CcmC and transfers the heme to apo-cytochromes in a process facilitated by CcmF and CcmH. The chain is Cytochrome c-type biogenesis protein CcmE from Glaesserella parasuis serovar 5 (strain SH0165) (Haemophilus parasuis).